A 348-amino-acid polypeptide reads, in one-letter code: Mediator of RNA polymerase II transcription subunit 18 (348 aa).

The span at 152 to 218 shows a compositional bias: basic and acidic residues; it reads MDVDLEHKDK…KNDEVKHSEV (67 aa). Positions 152–227 are disordered; it reads MDVDLEHKDK…VNLEDGAETG (76 aa). The stretch at 167-223 forms a coiled coil; sequence DTKEKEEDKKEEDKKEEDKKEEDKKEEDKKEEDKKEEEKVEKKNDEVKHSEVNLEDG.

This sequence belongs to the Mediator complex subunit 18 family. In terms of assembly, component of the Mediator complex.

The protein resides in the nucleus. Functionally, component of the Mediator complex, a coactivator involved in the regulated transcription of nearly all RNA polymerase II-dependent genes. Mediator functions as a bridge to convey information from gene-specific regulatory proteins to the basal RNA polymerase II transcription machinery. Mediator is recruited to promoters by direct interactions with regulatory proteins and serves as a scaffold for the assembly of a functional preinitiation complex with RNA polymerase II and the general transcription factors. The chain is Mediator of RNA polymerase II transcription subunit 18 (SRB5) from Scheffersomyces stipitis (strain ATCC 58785 / CBS 6054 / NBRC 10063 / NRRL Y-11545) (Yeast).